The chain runs to 278 residues: MKYWNLKRNNQFAFEKVGPIPRSITNTFEKFRKELDPNGESEAIEEFRISRHQTITSVKYILLLFISPVLVNQASKFFVFGPCIDYLWNQEQPKIFLNSSQEERAFAELQRFEEKIHFEVLLNPSEDISYEIIEKRVQLKARELGEYYANESANAVKNILSDLVSILVFILLMITGQRQIAVVKSFLNEIIYGLSDTAKAFLIILFTDMFVGFHSPHGWEVIIEVILRHLGLPESRDFIFLFISTFPVILDTIFKYWIFRYLNQVSPSAVATYHNMNE.

A run of 4 helical transmembrane segments spans residues 61–81 (ILLL…FVFG), 155–175 (AVKN…LMIT), 203–223 (IILF…EVII), and 238–258 (FIFL…KYWI).

Belongs to the CemA family.

The protein resides in the plastid. It is found in the chloroplast inner membrane. It catalyses the reaction K(+)(in) + H(+)(out) = K(+)(out) + H(+)(in). Functionally, contributes to K(+)/H(+) antiport activity by supporting proton efflux to control proton extrusion and homeostasis in chloroplasts in a light-dependent manner to modulate photosynthesis. Prevents excessive induction of non-photochemical quenching (NPQ) under continuous-light conditions. Indirectly promotes efficient inorganic carbon uptake into chloroplasts. The protein is Potassium/proton antiporter CemA of Pyropia yezoensis (Susabi-nori).